The chain runs to 465 residues: Sushi repeat-containing protein SRPX2 (465 aa).

The signal sequence occupies residues 1-23 (MASQLTQRGALFLLFFLTPAVTP). 3 consecutive Sushi domains span residues 69–119 (ATCY…YCRQ), 120–178 (MRCH…VCVD), and 262–321 (RRCP…ICAP). 4 disulfides stabilise this stretch: C71/C105, C91/C117, C122/C163, and C149/C176. Positions 177–261 (VDIDPPKIRC…SCKFIVKVQV (85 aa)) constitute an HYR domain. 2 disulfide bridges follow: C264-C306 and C292-C319.

In terms of assembly, forms homooligomers. Interacts with PLAUR (via the UPAR/Ly6 domains), ADAMTS4 and CTSB. Interacts with HGF; the interaction increases the mitogenic activity of HGF. Post-translationally, contains chondroitin sulfate chains. Expressed in neurons of the rolandic area of the brain (at protein level). Highly expressed in the brain, placenta, lung, trachea, uterus, adrenal gland, heart, ovary and placenta. Weakly expressed in the peripheral blood, brain and bone marrow. Expressed in numerous cancer cell lines and in gastrointestinal cancer cells. Higher levels found in colorectal cancers than in normal colonic mucosa.

It is found in the secreted. The protein resides in the cytoplasm. It localises to the cell surface. Its subcellular location is the synapse. Acts as a ligand for the urokinase plasminogen activator surface receptor. Plays a role in angiogenesis by inducing endothelial cell migration and the formation of vascular network (cords). Involved in cellular migration and adhesion. Increases the phosphorylation levels of FAK. Interacts with and increases the mitogenic activity of HGF. Promotes synapse formation. May have a role in the perisylvian region, critical for language and cognitive development. This chain is Sushi repeat-containing protein SRPX2 (SRPX2), found in Homo sapiens (Human).